Here is a 634-residue protein sequence, read N- to C-terminus: CRISPR-associated protein MJ1674 (634 aa).

In terms of biological role, CRISPR (clustered regularly interspaced short palindromic repeat) is an adaptive immune system that provides protection against mobile genetic elements (viruses, transposable elements and conjugative plasmids). CRISPR clusters contain spacers, sequences complementary to antecedent mobile elements, and target invading nucleic acids. CRISPR clusters are transcribed and processed into CRISPR RNA (crRNA). The type III Csm effector complex binds crRNA and acts as a crRNA-guided RNase, DNase and cyclic oligoadenylate synthase; binding of target RNA cognate to the crRNA is required for all activities. This chain is CRISPR-associated protein MJ1674, found in Methanocaldococcus jannaschii (strain ATCC 43067 / DSM 2661 / JAL-1 / JCM 10045 / NBRC 100440) (Methanococcus jannaschii).